The primary structure comprises 651 residues: Ion-translocating oxidoreductase complex subunit C (651 aa).

4Fe-4S ferredoxin-type domains lie at 368 to 398 and 408 to 437; these read EYAEPEAEQACIRCSSCSDACPVNLMPQQLY and KSEEYALKDCIECGICAYVCPSHIPLIQYF. Residues cysteine 378, cysteine 381, cysteine 384, cysteine 388, cysteine 417, cysteine 420, cysteine 423, and cysteine 427 each contribute to the [4Fe-4S] cluster site. Composition is skewed to basic and acidic residues over residues 465 to 477 and 485 to 513; these read QARMEREEQERKA and ARREELAQTKGEDPVKAALERLKAKKANE. Disordered regions lie at residues 465 to 565 and 583 to 624; these read QARM…QPTD and LAQA…DPKK. Composition is skewed to polar residues over residues 554–564 and 587–600; these read VENQEQQTQPT and NSTSEAISNSQTAE. The segment covering 602-614 has biased composition (basic and acidic residues); it reads EVEKTKSAVEKTQ.

It belongs to the 4Fe4S bacterial-type ferredoxin family. RnfC subfamily. As to quaternary structure, the complex is composed of six subunits: RnfA, RnfB, RnfC, RnfD, RnfE and RnfG. It depends on [4Fe-4S] cluster as a cofactor.

It is found in the cell inner membrane. Part of a membrane-bound complex that couples electron transfer with translocation of ions across the membrane. This Haemophilus influenzae (strain PittEE) protein is Ion-translocating oxidoreductase complex subunit C.